The sequence spans 293 residues: Putative ribose uptake protein RbsU (293 aa).

10 consecutive transmembrane segments (helical) span residues 5–24, 34–51, 58–80, 95–114, 121–138, 153–170, 177–199, 212–234, 241–263, and 273–292; these read ALLI…TVAS, IIGA…LAVV, TGTN…IITF, TTAF…LGNW, IIGF…RMTV, RAVV…LYSA, IDGL…IYGF, ITWL…LISA, LATG…IYFL, and VITI…TVFI.

The protein belongs to the GRP transporter (TC 2.A.7.5) family.

It localises to the cell membrane. Functionally, could be involved in the uptake of ribose. The chain is Putative ribose uptake protein RbsU (rbsU) from Staphylococcus aureus (strain COL).